A 723-amino-acid chain; its full sequence is Ribosome quality control complex subunit 1 (723 aa).

The interval 21–125 (SNSNANKMTS…DKGSDDDDDD (105 aa)) is disordered. The span at 27–37 (KMTSGKSTAGN) shows a compositional bias: polar residues. The span at 93-108 (SSRRKKNKKAKRKQKN) shows a compositional bias: basic residues. The segment covering 109 to 118 (HTAEAAKDKG) has biased composition (basic and acidic residues). Ser119 bears the Phosphoserine mark. Thr158 carries the phosphothreonine modification. Ser160 carries the phosphoserine modification.

This sequence belongs to the TCF25 family. In terms of assembly, component of the ribosome quality control complex (RQC), composed of the E3 ubiquitin ligase RKR1/LTN1, RQC1 and RQC2, as well as CDC48 and its ubiquitin-binding cofactors. RQC forms a stable complex with 60S ribosomal subunits.

It localises to the cytoplasm. Functionally, component of the ribosome quality control complex (RQC), a ribosome-associated complex that mediates ubiquitination and extraction of incompletely synthesized nascent chains for proteasomal degradation. Within the RQC complex, RQC1 is essential for the recruitment of CDC48 to incompletely synthesized nascent polypeptides that are ubiquitinated by RKR1/LTN1. The protein is Ribosome quality control complex subunit 1 of Saccharomyces cerevisiae (strain ATCC 204508 / S288c) (Baker's yeast).